The sequence spans 296 residues: Pseudouridine-5'-phosphate glycosidase (296 aa).

Catalysis depends on glutamate 21, which acts as the Proton donor. Substrate contacts are provided by lysine 81 and valine 101. A Mn(2+)-binding site is contributed by aspartate 130. Residue 132 to 134 coordinates substrate; it reads SQD. Residue lysine 151 is the Nucleophile of the active site.

This sequence belongs to the pseudouridine-5'-phosphate glycosidase family. In terms of assembly, homotrimer. The cofactor is Mn(2+).

It catalyses the reaction D-ribose 5-phosphate + uracil = psi-UMP + H2O. Catalyzes the reversible cleavage of pseudouridine 5'-phosphate (PsiMP) to ribose 5-phosphate and uracil. Functions biologically in the cleavage direction, as part of a pseudouridine degradation pathway. This Fervidobacterium nodosum (strain ATCC 35602 / DSM 5306 / Rt17-B1) protein is Pseudouridine-5'-phosphate glycosidase.